The primary structure comprises 428 residues: Glutamate-1-semialdehyde 2,1-aminomutase (428 aa).

Position 267 is an N6-(pyridoxal phosphate)lysine (Lys267).

It belongs to the class-III pyridoxal-phosphate-dependent aminotransferase family. HemL subfamily. As to quaternary structure, homodimer. Pyridoxal 5'-phosphate is required as a cofactor.

It localises to the cytoplasm. It carries out the reaction (S)-4-amino-5-oxopentanoate = 5-aminolevulinate. It functions in the pathway porphyrin-containing compound metabolism; protoporphyrin-IX biosynthesis; 5-aminolevulinate from L-glutamyl-tRNA(Glu): step 2/2. The protein operates within porphyrin-containing compound metabolism; chlorophyll biosynthesis. In Prochlorococcus marinus (strain NATL1A), this protein is Glutamate-1-semialdehyde 2,1-aminomutase.